Here is a 200-residue protein sequence, read N- to C-terminus: Outer-membrane lipoprotein carrier protein (200 aa).

Residues 1-18 (MKAVVFAMVMAVSFNVFA) form the signal peptide.

The protein belongs to the LolA family. As to quaternary structure, monomer.

It localises to the periplasm. Participates in the translocation of lipoproteins from the inner membrane to the outer membrane. Only forms a complex with a lipoprotein if the residue after the N-terminal Cys is not an aspartate (The Asp acts as a targeting signal to indicate that the lipoprotein should stay in the inner membrane). This Idiomarina loihiensis (strain ATCC BAA-735 / DSM 15497 / L2-TR) protein is Outer-membrane lipoprotein carrier protein.